The following is a 291-amino-acid chain: Glycine--tRNA ligase alpha subunit (291 aa).

Belongs to the class-II aminoacyl-tRNA synthetase family. Tetramer of two alpha and two beta subunits.

Its subcellular location is the cytoplasm. The catalysed reaction is tRNA(Gly) + glycine + ATP = glycyl-tRNA(Gly) + AMP + diphosphate. The sequence is that of Glycine--tRNA ligase alpha subunit from Nitratidesulfovibrio vulgaris (strain DSM 19637 / Miyazaki F) (Desulfovibrio vulgaris).